We begin with the raw amino-acid sequence, 374 residues long: Type II methyltransferase M.BbvI (374 aa).

The region spanning 3-347 is the SAM-dependent MTase C5-type domain; it reads FRKGELFCGP…EAVLKTFARI (345 aa). C92 is an active-site residue.

Belongs to the class I-like SAM-binding methyltransferase superfamily. C5-methyltransferase family.

The enzyme catalyses a 2'-deoxycytidine in DNA + S-adenosyl-L-methionine = a 5-methyl-2'-deoxycytidine in DNA + S-adenosyl-L-homocysteine + H(+). Its function is as follows. A methylase, recognizes the double-stranded sequence 5'-GCAGC-3', methylates C-2 on both strands, and protects the DNA from cleavage by the BbvI endonuclease. This Brevibacillus brevis (Bacillus brevis) protein is Type II methyltransferase M.BbvI (bbvIM).